Reading from the N-terminus, the 329-residue chain is Eukaryotic translation initiation factor 3 subunit I (329 aa).

WD repeat units lie at residues 8-47, 50-89, 145-184, 187-226, and 284-323; these read GHQRAITQIKYNREGDLLFSAAKDSKPNVWWSLNGERLGT, GHGGVIWCLDVDWQSINLITGGGDSSCRLWDLETGKNIAT, ITDSKVTSMIWGSLDETIITGHEAGDLIQWDLRTGKKIHS, EHTHQITDMQLSRDGTMFVTASKDHTAKLFDTNSLELLKE, and GHFGPINSLAFHPDGKSYASGGEDGYVRVHNFDQSYFDYT.

It belongs to the eIF-3 subunit I family. As to quaternary structure, component of the eukaryotic translation initiation factor 3 (eIF-3) complex.

It localises to the cytoplasm. In terms of biological role, component of the eukaryotic translation initiation factor 3 (eIF-3) complex, which is involved in protein synthesis of a specialized repertoire of mRNAs and, together with other initiation factors, stimulates binding of mRNA and methionyl-tRNAi to the 40S ribosome. The eIF-3 complex specifically targets and initiates translation of a subset of mRNAs involved in cell proliferation. This is Eukaryotic translation initiation factor 3 subunit I from Bombyx mori (Silk moth).